A 180-amino-acid chain; its full sequence is Endogenous alpha-amylase/subtilisin inhibitor (180 aa).

Disulfide bonds link Cys42–Cys89 and Cys143–Cys147.

This sequence belongs to the protease inhibitor I3 (leguminous Kunitz-type inhibitor) family.

Functionally, inhibitor of endogenous alpha-amylase (wheat also produces an exogenous inhibitor which inactivates alpha-amylase from animal and insect origin). This inhibitor can also inhibit subtilisin. This Triticum aestivum (Wheat) protein is Endogenous alpha-amylase/subtilisin inhibitor.